The chain runs to 205 residues: Protein GrpE (205 aa).

Belongs to the GrpE family. In terms of assembly, homodimer.

Its subcellular location is the cytoplasm. In terms of biological role, participates actively in the response to hyperosmotic and heat shock by preventing the aggregation of stress-denatured proteins, in association with DnaK and GrpE. It is the nucleotide exchange factor for DnaK and may function as a thermosensor. Unfolded proteins bind initially to DnaJ; upon interaction with the DnaJ-bound protein, DnaK hydrolyzes its bound ATP, resulting in the formation of a stable complex. GrpE releases ADP from DnaK; ATP binding to DnaK triggers the release of the substrate protein, thus completing the reaction cycle. Several rounds of ATP-dependent interactions between DnaJ, DnaK and GrpE are required for fully efficient folding. This Shewanella loihica (strain ATCC BAA-1088 / PV-4) protein is Protein GrpE.